Reading from the N-terminus, the 89-residue chain is Small ribosomal subunit protein uS15 (89 aa).

It belongs to the universal ribosomal protein uS15 family. In terms of assembly, part of the 30S ribosomal subunit. Forms a bridge to the 50S subunit in the 70S ribosome, contacting the 23S rRNA.

In terms of biological role, one of the primary rRNA binding proteins, it binds directly to 16S rRNA where it helps nucleate assembly of the platform of the 30S subunit by binding and bridging several RNA helices of the 16S rRNA. Functionally, forms an intersubunit bridge (bridge B4) with the 23S rRNA of the 50S subunit in the ribosome. The polypeptide is Small ribosomal subunit protein uS15 (Nostoc punctiforme (strain ATCC 29133 / PCC 73102)).